We begin with the raw amino-acid sequence, 436 residues long: Septin-7 (436 aa).

N-acetylserine is present on Ser-2. Tyr-29 carries the post-translational modification Phosphotyrosine. The 270-residue stretch at 46 to 315 (RGFEFTLMVV…ENYRSRKLAA (270 aa)) folds into the Septin-type G domain. The interaction with SEPTIN12 stretch occupies residues 46–316 (RGFEFTLMVV…NYRSRKLAAV (271 aa)). Residues 56–63 (GESGLGKS) are G1 motif. 56 to 63 (GESGLGKS) provides a ligand contact to GTP. Residue Ser-76 is modified to Phosphoserine. GTP-binding positions include Thr-89, Gly-115, and 194-202 (KADTLTPEE). The G3 motif stretch occupies residues 112–115 (DTPG). Positions 193 to 196 (AKAD) are G4 motif. The residue at position 227 (Thr-227) is a Phosphothreonine. The GTP site is built by Gly-249 and Arg-264. Residues 331–436 (TKSPLAQMEE…EKNKKKGKIF (106 aa)) are a coiled coil. The residue at position 333 (Ser-333) is a Phosphoserine. Position 372 is an N6-acetyllysine (Lys-372). A compositionally biased stretch (basic and acidic residues) spans 377 to 409 (ELQRRHEQMKKNLEAQHKELEEKRRQFEEEKAN). The disordered stretch occupies residues 377 to 436 (ELQRRHEQMKKNLEAQHKELEEKRRQFEEEKANWEAQQRILEQQNSSRTLEKNKKKGKIF). The residue at position 423 (Ser-423) is a Phosphoserine. Thr-425 bears the Phosphothreonine mark.

This sequence belongs to the TRAFAC class TrmE-Era-EngA-EngB-Septin-like GTPase superfamily. Septin GTPase family. Septins polymerize into heterooligomeric protein complexes that form filaments, and associate with cellular membranes, actin filaments and microtubules. GTPase activity is required for filament formation. Filaments are assembled from asymmetrical heterotrimers, composed of SEPTIN2, SEPTIN6 and SEPTIN7 that associate head-to-head to form a hexameric unit. Within the trimer, directly interacts with SEPTIN6, while interaction with SEPTIN2 seems indirect. In the absence of SEPTIN6, forms homodimers. Interacts directly with CENPE and links CENPE to septin filaments composed of SEPTIN2, SEPTIN6 and SEPTIN7. Interacts with SEPTIN5. Component of a septin core octameric complex consisting of SEPTIN12, SEPTIN7, SEPTIN6 and SEPTIN2 or SEPTIN4 in the order 12-7-6-2-2-6-7-12 or 12-7-6-4-4-6-7-12 and located in the sperm annulus; the SEPTIN12:SEPTIN7 association is mediated by the respective GTP-binding domains. Interacts with SEPTIN2, SEPTIN7, SEPTIN8, SEPTIN9 and SEPTIN11.

The protein resides in the cytoplasm. Its subcellular location is the chromosome. It is found in the centromere. The protein localises to the kinetochore. It localises to the cytoskeleton. The protein resides in the spindle. Its subcellular location is the cleavage furrow. It is found in the midbody. The protein localises to the cilium axoneme. It localises to the cell projection. The protein resides in the cilium. Its subcellular location is the flagellum. Functionally, filament-forming cytoskeletal GTPase. Required for normal organization of the actin cytoskeleton. Required for normal progress through mitosis. Involved in cytokinesis. Required for normal association of CENPE with the kinetochore. Plays a role in ciliogenesis and collective cell movements. Forms a filamentous structure with SEPTIN12, SEPTIN6, SEPTIN2 and probably SEPTIN4 at the sperm annulus which is required for the structural integrity and motility of the sperm tail during postmeiotic differentiation. The protein is Septin-7 of Rattus norvegicus (Rat).